Consider the following 114-residue polypeptide: NLP effector protein 1 (114 aa).

This sequence belongs to the Necrosis inducing protein (NPP1) family.

Its subcellular location is the secreted. The protein resides in the host cytoplasm. Its function is as follows. Probable secreted effector that may act as a pathogen-associated molecular pattern (PAMP) recognized by the plant immune system. Seems not to induce necrosis, neither in several susceptible or resistant Vitis species nor in the dicot model plant Nicotiana benthamiana. The chain is NLP effector protein 1 from Plasmopara viticola (Downy mildew of grapevine).